The primary structure comprises 786 residues: LPS-assembly protein LptD (786 aa).

The N-terminal stretch at 1-24 is a signal peptide; that stretch reads MSFTSRSLLASFTGCLLYGTPAIA.

Belongs to the LptD family. In terms of assembly, component of the lipopolysaccharide transport and assembly complex. Interacts with LptE and LptA.

The protein resides in the cell outer membrane. Together with LptE, is involved in the assembly of lipopolysaccharide (LPS) at the surface of the outer membrane. In Aliivibrio fischeri (strain ATCC 700601 / ES114) (Vibrio fischeri), this protein is LPS-assembly protein LptD.